A 525-amino-acid chain; its full sequence is MSL complex subunit 3 (525 aa).

Positions serine 13–valine 72 constitute a Tudor-knot domain. 2 disordered regions span residues lysine 119–arginine 148 and threonine 302–alanine 383. Residues serine 136–glutamate 146 are compositionally biased toward basic and acidic residues. Residues aspartate 172–proline 521 form the MRG domain. The segment at phenylalanine 294–proline 444 is required for the histone acetyltransferase activity of the MSL complex. Serine 313 and serine 315 each carry phosphoserine. Low complexity predominate over residues asparagine 320–proline 332. Serine 371 and serine 404 each carry phosphoserine. Threonine 409 carries the phosphothreonine modification. Phosphoserine is present on residues serine 411 and serine 415.

As to quaternary structure, component of the MSL histone acetyltransferase complex at least composed of the KAT8/MOF, MSL1/hampin, MSL2 and MSL3. Interacts (via the MRG domain) with MSL1 and KAT8/MOF. In terms of tissue distribution, in testis, expression is mostly restricted to the spermatocyte stage and only in a small portion of spermatogonia.

The protein resides in the nucleus. Its function is as follows. Non-catalytic component of the MSL histone acetyltransferase complex, a multiprotein complex that mediates the majority of histone H4 acetylation at 'Lys-16' (H4K16ac), an epigenetic mark that prevents chromatin compaction. The MSL complex is required for chromosome stability and genome integrity by maintaining homeostatic levels of H4K16ac. The MSL complex is also involved in gene dosage by promoting up-regulation of genes expressed by the X chromosome. X up-regulation is required to compensate for autosomal biallelic expression. The MSL complex also participates in gene dosage compensation by promoting expression of Tsix non-coding RNA. Acts as a histone reader that specifically recognizes and binds histone H4 monomethylated at 'Lys-20' (H4K20Me1) in a DNA-dependent manner and is proposed to be involved in chromosomal targeting of the MSL complex. May play a role X inactivation in females. The chain is MSL complex subunit 3 from Mus musculus (Mouse).